The following is a 360-amino-acid chain: F420-dependent hydroxymycolic acid dehydrogenase (360 aa).

The tat-type signal signal peptide spans 1-40 (MTGISRRTFGLAAGFGAIGAGGLGGGCSTRSGPTPTPEPA). D77 contacts coenzyme F420-(gamma-Glu)n. The active-site Proton donor is the H78. Coenzyme F420-(gamma-Glu)n is bound at residue 145-146 (TG). The active-site Proton acceptor is the E147. Coenzyme F420-(gamma-Glu)n-binding positions include N150 and 213–214 (SG).

Belongs to the F420-dependent hydroxymycolic acid dehydrogenase family. Homodimer. Post-translationally, is exported by the Tat system. The position of the signal peptide cleavage has not been experimentally proven. May be lipidated.

The protein resides in the cell envelope. It participates in lipid metabolism; mycolic acid biosynthesis. Is inhibited by the anti-tuberculous drug PA-824, a bicyclic 4-nitroimidazole class compound. Therefore, this is consistent with the finding that PA-824 inhibits the formation of K-MAs and causes an accumulation of hydroxymycolic acids (H-MAs) in M.tuberculosis. In terms of biological role, catalyzes the coenzyme F420-dependent oxidation of hydroxymycolic acids (H-MAs) to ketomycolic acids (K-MAs), a lipid class making up the mycobacterial pseudo-outer membrane and over one-third of the dry weight of M.tuberculosis. Does not exhibit F420-dependent glucose-6-phosphate dehydrogenase (FGD) activity. The sequence is that of F420-dependent hydroxymycolic acid dehydrogenase from Mycobacterium tuberculosis (strain ATCC 25618 / H37Rv).